The sequence spans 129 residues: Small ribosomal subunit protein uS11 (129 aa).

The protein belongs to the universal ribosomal protein uS11 family. As to quaternary structure, part of the 30S ribosomal subunit. Interacts with proteins S7 and S18. Binds to IF-3.

In terms of biological role, located on the platform of the 30S subunit, it bridges several disparate RNA helices of the 16S rRNA. Forms part of the Shine-Dalgarno cleft in the 70S ribosome. This chain is Small ribosomal subunit protein uS11, found in Nitratidesulfovibrio vulgaris (strain ATCC 29579 / DSM 644 / CCUG 34227 / NCIMB 8303 / VKM B-1760 / Hildenborough) (Desulfovibrio vulgaris).